Here is a 364-residue protein sequence, read N- to C-terminus: Peptide chain release factor 1 (364 aa).

Position 230 is an N5-methylglutamine (Gln230).

The protein belongs to the prokaryotic/mitochondrial release factor family. Post-translationally, methylated by PrmC. Methylation increases the termination efficiency of RF1.

Its subcellular location is the cytoplasm. In terms of biological role, peptide chain release factor 1 directs the termination of translation in response to the peptide chain termination codons UAG and UAA. This chain is Peptide chain release factor 1, found in Acidothermus cellulolyticus (strain ATCC 43068 / DSM 8971 / 11B).